Reading from the N-terminus, the 337-residue chain is ATP-dependent 6-phosphofructokinase (337 aa).

G11 is a binding site for ATP. 21–25 (RAVVR) contributes to the ADP binding site. Residues 72–73 (RY) and 102–105 (GDGS) contribute to the ATP site. D103 contacts Mg(2+). 125–127 (TID) is a substrate binding site. D127 serves as the catalytic Proton acceptor. R154 contributes to the ADP binding site. Residues R162 and 169–171 (MGR) contribute to the substrate site. Residues 185–187 (GAD), K212, and 214–216 (KNH) contribute to the ADP site. Substrate is bound by residues E223, R245, and 251-254 (HILR).

It belongs to the phosphofructokinase type A (PFKA) family. ATP-dependent PFK group I subfamily. Prokaryotic clade 'B1' sub-subfamily. As to quaternary structure, homotetramer. Mg(2+) serves as cofactor.

Its subcellular location is the cytoplasm. It carries out the reaction beta-D-fructose 6-phosphate + ATP = beta-D-fructose 1,6-bisphosphate + ADP + H(+). The protein operates within carbohydrate degradation; glycolysis; D-glyceraldehyde 3-phosphate and glycerone phosphate from D-glucose: step 3/4. With respect to regulation, allosterically activated by ADP and other diphosphonucleosides, and allosterically inhibited by phosphoenolpyruvate. Its function is as follows. Catalyzes the phosphorylation of D-fructose 6-phosphate to fructose 1,6-bisphosphate by ATP, the first committing step of glycolysis. This is ATP-dependent 6-phosphofructokinase from Streptococcus pyogenes serotype M3 (strain SSI-1).